A 65-amino-acid chain; its full sequence is Weak toxin CM-13b (65 aa).

Disulfide bonds link cysteine 3/cysteine 24, cysteine 6/cysteine 11, cysteine 17/cysteine 42, cysteine 46/cysteine 57, and cysteine 58/cysteine 63.

The protein belongs to the three-finger toxin family. Ancestral subfamily. Orphan group II sub-subfamily. As to expression, expressed by the venom gland.

It is found in the secreted. Binds with low affinity to muscular (alpha-1-beta-1-delta-epsilon/CHRNA1-CHRNB1-CHRND-CHRNE) and very low affinity to neuronal (alpha-7/CHRNA7) nicotinic acetylcholine receptor (nAChR). The protein is Weak toxin CM-13b of Naja annulifera (Banded Egyptian cobra).